Here is a 217-residue protein sequence, read N- to C-terminus: MAPGSWFSPLFIAVITLGLQWPKEAATFPAMPLSNLFANAVLRAQHLHLLAAETYKEFERTYIPEEQRHANKNSQSAFCYSETIPAPTGKDDAQQKSDMELLRFSLVLIQSWLTPVQYLSKVFTNNLVFGTSDRVYEKLKDLEEGIQALMRELEDRSSRGPPLLRSTYDKFDIHLRNEEALLKNYGLPSCFKKDLHKVETYLKVMKCRRFGESNCTI.

Positions 1-26 (MAPGSWFSPLFIAVITLGLQWPKEAA) are cleaved as a signal peptide. Histidine 46 is a Zn(2+) binding site. Cysteine 79 and cysteine 190 are joined by a disulfide. Glutamate 199 lines the Zn(2+) pocket. Cysteine 207 and cysteine 215 are joined by a disulfide.

It belongs to the somatotropin/prolactin family.

The protein localises to the secreted. In terms of biological role, growth hormone plays an important role in growth control. This is Somatotropin (GH) from Struthio camelus (Common ostrich).